The following is a 643-amino-acid chain: ATP-dependent RNA helicase DeaD (643 aa).

The Q motif signature appears at 6–34 (TTFADLGLKAPILEALTDLGYEKPSPIQA). A Helicase ATP-binding domain is found at 37–208 (IPHLLDGRDV…RRFMKEPQEV (172 aa)). 50–57 (AQTGSGKT) serves as a coordination point for ATP. The DEAD box motif lies at 156-159 (DEAD). One can recognise a Helicase C-terminal domain in the interval 232-379 (KNEALVRFLE…EVELPNAELL (148 aa)). 2 disordered regions span residues 440–482 (VPPV…KRER) and 557–643 (MNMQ…GGDA). Basic and acidic residues-rich tracts occupy residues 448-482 (PRRE…KRER) and 567-643 (PRTE…GGDA).

The protein belongs to the DEAD box helicase family. DeaD/CsdA subfamily.

Its subcellular location is the cytoplasm. The enzyme catalyses ATP + H2O = ADP + phosphate + H(+). In terms of biological role, DEAD-box RNA helicase involved in various cellular processes at low temperature, including ribosome biogenesis, mRNA degradation and translation initiation. In Klebsiella pneumoniae, this protein is ATP-dependent RNA helicase DeaD.